A 137-amino-acid chain; its full sequence is 14 kDa proline-rich protein DC2.15 (137 aa).

Residues 1-25 form the signal peptide; that stretch reads MGSKNSASVALFFTLNILFFALVSS. A disordered region spans residues 30-53; sequence PDPYKPKPKPTPKPTPTPYPSAGK. The span at 38–48 shows a compositional bias: pro residues; it reads KPTPKPTPTPY. The chain crosses the membrane as a helical span at residues 88–104; the sequence is LEGLVNLEAAVCLCTAI.

It localises to the membrane. Its function is as follows. May be connected with the initiation of embryogenesis or with the metabolic changes produced by the removal of auxins. The sequence is that of 14 kDa proline-rich protein DC2.15 from Daucus carota (Wild carrot).